The chain runs to 249 residues: 3-deoxy-manno-octulosonate cytidylyltransferase (249 aa).

The protein belongs to the KdsB family.

Its subcellular location is the cytoplasm. It carries out the reaction 3-deoxy-alpha-D-manno-oct-2-ulosonate + CTP = CMP-3-deoxy-beta-D-manno-octulosonate + diphosphate. The protein operates within nucleotide-sugar biosynthesis; CMP-3-deoxy-D-manno-octulosonate biosynthesis; CMP-3-deoxy-D-manno-octulosonate from 3-deoxy-D-manno-octulosonate and CTP: step 1/1. It functions in the pathway bacterial outer membrane biogenesis; lipopolysaccharide biosynthesis. Activates KDO (a required 8-carbon sugar) for incorporation into bacterial lipopolysaccharide in Gram-negative bacteria. The polypeptide is 3-deoxy-manno-octulosonate cytidylyltransferase (Oleidesulfovibrio alaskensis (strain ATCC BAA-1058 / DSM 17464 / G20) (Desulfovibrio alaskensis)).